Consider the following 582-residue polypeptide: 2-succinyl-5-enolpyruvyl-6-hydroxy-3-cyclohexene-1-carboxylate synthase (582 aa).

Belongs to the TPP enzyme family. MenD subfamily. As to quaternary structure, homodimer. Requires Mg(2+) as cofactor. It depends on Mn(2+) as a cofactor. The cofactor is thiamine diphosphate.

It carries out the reaction isochorismate + 2-oxoglutarate + H(+) = 5-enolpyruvoyl-6-hydroxy-2-succinyl-cyclohex-3-ene-1-carboxylate + CO2. Its pathway is quinol/quinone metabolism; 1,4-dihydroxy-2-naphthoate biosynthesis; 1,4-dihydroxy-2-naphthoate from chorismate: step 2/7. The protein operates within quinol/quinone metabolism; menaquinone biosynthesis. In terms of biological role, catalyzes the thiamine diphosphate-dependent decarboxylation of 2-oxoglutarate and the subsequent addition of the resulting succinic semialdehyde-thiamine pyrophosphate anion to isochorismate to yield 2-succinyl-5-enolpyruvyl-6-hydroxy-3-cyclohexene-1-carboxylate (SEPHCHC). The chain is 2-succinyl-5-enolpyruvyl-6-hydroxy-3-cyclohexene-1-carboxylate synthase from Chlorobaculum tepidum (strain ATCC 49652 / DSM 12025 / NBRC 103806 / TLS) (Chlorobium tepidum).